The chain runs to 194 residues: MKLLHLDSSALGANSVTRVLSAAVVEQQRRRHPEVDVSYRDLDRDPIPHLTAQTLAQTDPAEAAAAEAVMQQFLQADVIVIGAPMYNFAIPSTLKAWIDRIAVAGRTFQYTANGPEGLAGGKRVIIASARGGLYADPTNDFQEPYLRQVLGFLGIDDISFVRAEGVAYSPQHRADALASALAGLGEEEEAAVSA.

Residues Ser-9 and 85-88 (MYNF) contribute to the FMN site.

This sequence belongs to the azoreductase type 1 family. As to quaternary structure, homodimer. Requires FMN as cofactor.

The catalysed reaction is 2 a quinone + NADH + H(+) = 2 a 1,4-benzosemiquinone + NAD(+). It carries out the reaction N,N-dimethyl-1,4-phenylenediamine + anthranilate + 2 NAD(+) = 2-(4-dimethylaminophenyl)diazenylbenzoate + 2 NADH + 2 H(+). Its function is as follows. Quinone reductase that provides resistance to thiol-specific stress caused by electrophilic quinones. In terms of biological role, also exhibits azoreductase activity. Catalyzes the reductive cleavage of the azo bond in aromatic azo compounds to the corresponding amines. In Xanthomonas euvesicatoria pv. vesicatoria (strain 85-10) (Xanthomonas campestris pv. vesicatoria), this protein is FMN-dependent NADH:quinone oxidoreductase 1.